We begin with the raw amino-acid sequence, 445 residues long: ATP synthase subunit b-delta (445 aa).

The tract at residues Met1 to Ala168 is ATP synthase subunit b. Residues Ile3–Val23 traverse the membrane as a helical segment. The ATP synthase subunit delta stretch occupies residues Ser169–Asp445.

The protein in the N-terminal section; belongs to the ATPase B chain family. In the C-terminal section; belongs to the ATPase delta chain family. F-type ATPases have 2 components, F(1) - the catalytic core - and F(0) - the membrane proton channel. F(1) has five subunits: alpha(3), beta(3), gamma(1), delta(1), epsilon(1). F(0) has three main subunits: a(1), b(2) and c(10-14). The alpha and beta chains form an alternating ring which encloses part of the gamma chain. F(1) is attached to F(0) by a central stalk formed by the gamma and epsilon chains, while a peripheral stalk is formed by the delta and b chains.

It localises to the cell membrane. Its function is as follows. F(1)F(0) ATP synthase produces ATP from ADP in the presence of a proton or sodium gradient. F-type ATPases consist of two structural domains, F(1) containing the extramembraneous catalytic core and F(0) containing the membrane proton channel, linked together by a central stalk and a peripheral stalk. During catalysis, ATP synthesis in the catalytic domain of F(1) is coupled via a rotary mechanism of the central stalk subunits to proton translocation. This fusion protein includes a component of the F(0) channel (subunit b) and of the F(1) subunit (subunit delta). Two copies of subunit b and one of delta together form the peripheral 'stator' stalk which links F(1) to F(0). This Mycolicibacterium vanbaalenii (strain DSM 7251 / JCM 13017 / BCRC 16820 / KCTC 9966 / NRRL B-24157 / PYR-1) (Mycobacterium vanbaalenii) protein is ATP synthase subunit b-delta (atpFH).